The sequence spans 366 residues: Mannonate dehydratase (366 aa).

The protein belongs to the mannonate dehydratase family. The cofactor is Fe(2+). Mn(2+) serves as cofactor.

It catalyses the reaction D-mannonate = 2-dehydro-3-deoxy-D-gluconate + H2O. It participates in carbohydrate metabolism; pentose and glucuronate interconversion. In terms of biological role, catalyzes the dehydration of D-mannonate. The protein is Mannonate dehydratase of Streptococcus pneumoniae (strain 70585).